Consider the following 467-residue polypeptide: GTPase Der (467 aa).

EngA-type G domains lie at 3–167 and 179–352; these read PTLV…PYEE and PVIA…AAAR. Residues 9–16, 56–60, 119–122, 185–192, 232–236, and 297–300 contribute to the GTP site; these read GRPNVGKS, DTGGF, NKTE, DTAGL, and NKWD. Residues 353–437 form the KH-like domain; sequence AHIPTPKLTR…PLRVEFRTGH (85 aa). The tract at residues 434 to 467 is disordered; sequence RTGHNPYAGKKTPLTEEEARRAHSRRRRNRKKYG. A compositionally biased stretch (basic residues) spans 455 to 467; sequence AHSRRRRNRKKYG.

The protein belongs to the TRAFAC class TrmE-Era-EngA-EngB-Septin-like GTPase superfamily. EngA (Der) GTPase family. Associates with the 50S ribosomal subunit.

GTPase that plays an essential role in the late steps of ribosome biogenesis. This chain is GTPase Der, found in Nitrosomonas europaea (strain ATCC 19718 / CIP 103999 / KCTC 2705 / NBRC 14298).